A 675-amino-acid polypeptide reads, in one-letter code: MAQVAKKILVTCALPYANGSIHLGHMLEHIQADIWVRFQRMRGNQVHFICADDAHGTPIMLKAQQMGIEPEQMIAEMSQEHQQDFAGFAISYDNYHSTHSDENRELSSLIYGRLKANGYIKNRTISQLYDPEKGMFLPDRFVKGTCPKCKAPEQYGDNCEVCGATYSPTELIDPKSAVSGATPVMRESEHFFFDLPAFSDMLQAWTRSGALQEQVANKMQEWFDSGLQQWDITRDAPYFGFEVPDAPGKYFYVWLDAPIGYMGAFKNLCDKRGDLDFDEFWGKDAKTDLYHFIGKDIVYFHSLFWPAMLEGSNFRKPTNLFVHGYVTVNGAKMSKSRGTFIKAGTYLKYLDADCLRYYYAAKLSSRIDDIDLNLEDFVQRVNADIVNKVVNLASRNAGFINKRFAGQLADQLADPVLYKTFTDAATSIADAYNNRESGKAIREIMALADVANRYVDEQAPWVVAKQEGRDADLHAICSMGINLFRVLMTYLKPVLPSLTERTEAFLNTELTWDSIEQPLLGHSITAFKALFNRIDLDKVNEMVASSKEDMAPATRVTGPLADDPIQETISFDDFAKVDMRIALIQQAEFVEGSDKLLKLTLELGGETRQVFSGLRSAYPDPKALEGRMTVMVANLAPRKMRFGVSEGMVMAAGPGGSDIFLLSPDSGAQPGMQVK.

A 'HIGH' region motif is present at residues 15-25 (PYANGSIHLGH). Zn(2+)-binding residues include cysteine 146, cysteine 149, cysteine 159, and cysteine 162. The short motif at 332-336 (KMSKS) is the 'KMSKS' region element. Residue lysine 335 participates in ATP binding. A tRNA-binding domain is found at 573–675 (DFAKVDMRIA…SGAQPGMQVK (103 aa)).

Belongs to the class-I aminoacyl-tRNA synthetase family. MetG type 1 subfamily. Homodimer. Zn(2+) serves as cofactor.

Its subcellular location is the cytoplasm. The catalysed reaction is tRNA(Met) + L-methionine + ATP = L-methionyl-tRNA(Met) + AMP + diphosphate. Functionally, is required not only for elongation of protein synthesis but also for the initiation of all mRNA translation through initiator tRNA(fMet) aminoacylation. The sequence is that of Methionine--tRNA ligase from Yersinia pestis bv. Antiqua (strain Angola).